Consider the following 110-residue polypeptide: MGQPLKVKKRIYSQDVELVRAHIFVRGKVQGVFFRQSMKDVANKYGVKGWVRNRRDGRTVEAVLEGPKDAVLKVIEWARVGPPGARVEDLEVKWEEYKGEFNDFSILPTE.

The 89-residue stretch at 20-108 folds into the Acylphosphatase-like domain; it reads RAHIFVRGKV…GEFNDFSILP (89 aa). Catalysis depends on residues Arg-35 and Asn-53.

It belongs to the acylphosphatase family.

The enzyme catalyses an acyl phosphate + H2O = a carboxylate + phosphate + H(+). The sequence is that of Acylphosphatase (acyP) from Pyrobaculum calidifontis (strain DSM 21063 / JCM 11548 / VA1).